The following is a 254-amino-acid chain: uncharacterized protein (254 aa).

Residues 163-182 (PNKHTQHKRSTRRTSPKDYN) are disordered. Over residues 166–176 (HTQHKRSTRRT) the composition is skewed to basic residues. Residues 207–227 (AHSAWILIIIIIIIVVILFFF) traverse the membrane as a helical segment.

Belongs to the RL11 family.

It is found in the host membrane. This is an uncharacterized protein from Human cytomegalovirus (strain Merlin) (HHV-5).